The primary structure comprises 217 residues: Probable nicotinate-nucleotide adenylyltransferase (217 aa).

This sequence belongs to the NadD family.

The enzyme catalyses nicotinate beta-D-ribonucleotide + ATP + H(+) = deamido-NAD(+) + diphosphate. It participates in cofactor biosynthesis; NAD(+) biosynthesis; deamido-NAD(+) from nicotinate D-ribonucleotide: step 1/1. In terms of biological role, catalyzes the reversible adenylation of nicotinate mononucleotide (NaMN) to nicotinic acid adenine dinucleotide (NaAD). This is Probable nicotinate-nucleotide adenylyltransferase from Moorella thermoacetica (strain ATCC 39073 / JCM 9320).